Consider the following 686-residue polypeptide: Delta-like protein 4 (686 aa).

Positions 1–26 (MTPASRSACRWALLLLAVLWPQQRAA) are cleaved as a signal peptide. Over 27–532 (GSGIFQLRLQ…GLPPSFPWVA (506 aa)) the chain is Extracellular. 2 disulfide bridges follow: C51-C55 and C62-C75. N-linked (GlcNAc...) asparagine glycans are attached at residues N79, N109, and N162. In terms of domain architecture, DSL spans 174–218 (VICSDNYYGESCSRLCKKRDDHFGHYECQPDGSLSCLPGWTGKYC). An intrachain disulfide couples C176 to C185. Interaction with Notch1 stretches follow at residues 186–188 (SRL) and 192–196 (RDDHF). Intrachain disulfides connect C189–C201, C209–C218, C223–C234, C227–C240, C242–C251, C254–C265, C260–C271, C273–C282, C289–C301, C295–C311, C313–C322, C329–C340, C334–C349, C351–C360, C367–C378, C372–C389, C391–C400, C407–C418, C412–C427, C429–C438, C445–C456, C450–C465, C467–C476, C485–C496, C490–C507, and C509–C518. EGF-like domains follow at residues 219-252 (DQPI…RLCN), 253-283 (ECIP…LFCD), 285-323 (DLNY…EHCE), 325-361 (GLSK…QHCE), 364-401 (TLTC…SNCE), 403-439 (KVDR…THCE), 441-477 (HISD…RRCE), and 481-519 (THDA…SRCE). A glycan (N-linked (GlcNAc...) asparagine) is linked at N297. N-linked (GlcNAc...) asparagine glycosylation is present at N394. A helical membrane pass occupies residues 533-553 (VSLGVGLVVLLVLLVMVVVAV). The Cytoplasmic portion of the chain corresponds to 554–686 (RQLRLRRPDD…RNECVIATEV (133 aa)).

As to quaternary structure, interacts with NOTCH4. Interacts (via N-terminal DSL and MNNL domains) with NOTCH1 (via EGF-like domains). As to expression, expressed in vascular endothelium. Expressed in retina at least during embryogenesis.

The protein resides in the cell membrane. Functionally, involved in the Notch signaling pathway as Notch ligand. Activates NOTCH1 and NOTCH4. Involved in angiogenesis; negatively regulates endothelial cell proliferation and migration and angiogenic sprouting. Essential for retinal progenitor proliferation. Required for suppressing rod fates in late retinal progenitors as well as for proper generation of other retinal cell types. During spinal cord neurogenesis, inhibits V2a interneuron fate. The chain is Delta-like protein 4 (Dll4) from Mus musculus (Mouse).